Here is a 327-residue protein sequence, read N- to C-terminus: Sphingomyelinase D (327 aa).

Positions M1–G23 are cleaved as a signal peptide. H52 is a catalytic residue. Residues E72, D74, and D117 each contribute to the Mg(2+) site. The short motif at V320–W327 is the SMD-tail element.

The protein belongs to the sphingomyelinase D/phospholipase D family. Requires Mg(2+) as cofactor.

The protein resides in the secreted. The enzyme catalyses a sphingomyelin + H2O = an N-acylsphing-4-enine 1-phosphate + choline + H(+). In terms of biological role, catalyzes the hydrolysis of sphingomyelin. Sphingomyelinases D are produced by some spider in their venoms, but also by arthropods such as ticks, or pathogenic bacteria and fungi. They might play a role in pathogenicity through different mechanisms, such as membrane destabilization and host cell penetration, but also pulmonary inflammation and cutaneous lesions. The sequence is that of Sphingomyelinase D from Paracoccidioides brasiliensis (strain Pb03).